Here is a 429-residue protein sequence, read N- to C-terminus: 4-hydroxy-3-methylbut-2-en-1-yl diphosphate synthase (flavodoxin) (429 aa).

[4Fe-4S] cluster is bound by residues Cys-310, Cys-313, Cys-356, and Glu-363.

Belongs to the IspG family. It depends on [4Fe-4S] cluster as a cofactor.

The enzyme catalyses (2E)-4-hydroxy-3-methylbut-2-enyl diphosphate + oxidized [flavodoxin] + H2O + 2 H(+) = 2-C-methyl-D-erythritol 2,4-cyclic diphosphate + reduced [flavodoxin]. It functions in the pathway isoprenoid biosynthesis; isopentenyl diphosphate biosynthesis via DXP pathway; isopentenyl diphosphate from 1-deoxy-D-xylulose 5-phosphate: step 5/6. Converts 2C-methyl-D-erythritol 2,4-cyclodiphosphate (ME-2,4cPP) into 1-hydroxy-2-methyl-2-(E)-butenyl 4-diphosphate. The polypeptide is 4-hydroxy-3-methylbut-2-en-1-yl diphosphate synthase (flavodoxin) (Bradyrhizobium sp. (strain BTAi1 / ATCC BAA-1182)).